Here is a 471-residue protein sequence, read N- to C-terminus: Tryptophanase (471 aa).

An N6-(pyridoxal phosphate)lysine modification is found at lysine 270.

This sequence belongs to the beta-eliminating lyase family. As to quaternary structure, homotetramer. Pyridoxal 5'-phosphate is required as a cofactor.

The catalysed reaction is L-tryptophan + H2O = indole + pyruvate + NH4(+). Its pathway is amino-acid degradation; L-tryptophan degradation via pyruvate pathway; indole and pyruvate from L-tryptophan: step 1/1. The sequence is that of Tryptophanase from Histophilus somni (strain 2336) (Haemophilus somnus).